Here is a 76-residue protein sequence, read N- to C-terminus: ATP synthase subunit 9, mitochondrial (76 aa).

Transmembrane regions (helical) follow at residues 14–34 (MATL…VALI) and 52–72 (ILGF…SFLL).

Belongs to the ATPase C chain family. F-type ATPases have 2 components, CF(1) - the catalytic core - and CF(0) - the membrane proton channel. CF(1) has five subunits: alpha(3), beta(3), gamma(1), delta(1), epsilon(1). CF(0) has three main subunits: a, b and c.

It localises to the mitochondrion membrane. Functionally, mitochondrial membrane ATP synthase (F(1)F(0) ATP synthase or Complex V) produces ATP from ADP in the presence of a proton gradient across the membrane which is generated by electron transport complexes of the respiratory chain. F-type ATPases consist of two structural domains, F(1) - containing the extramembraneous catalytic core and F(0) - containing the membrane proton channel, linked together by a central stalk and a peripheral stalk. During catalysis, ATP synthesis in the catalytic domain of F(1) is coupled via a rotary mechanism of the central stalk subunits to proton translocation. Part of the complex F(0) domain. A homomeric c-ring of probably 10 subunits is part of the complex rotary element. In Debaryomyces hansenii (strain ATCC 36239 / CBS 767 / BCRC 21394 / JCM 1990 / NBRC 0083 / IGC 2968) (Yeast), this protein is ATP synthase subunit 9, mitochondrial (ATP9).